A 465-amino-acid polypeptide reads, in one-letter code: Trigger factor (465 aa).

The PPIase FKBP-type domain maps to 164–245; the sequence is GDFVSIDLSA…VQSVKERELP (82 aa). Positions 430–465 are disordered; the sequence is GNTVDTAEMFGEPAAEPEQADAAQAGDAEKAAADSE. Residues 440 to 455 are compositionally biased toward low complexity; it reads GEPAAEPEQADAAQAG. A compositionally biased stretch (basic and acidic residues) spans 456–465; the sequence is DAEKAAADSE.

Belongs to the FKBP-type PPIase family. Tig subfamily.

The protein resides in the cytoplasm. It catalyses the reaction [protein]-peptidylproline (omega=180) = [protein]-peptidylproline (omega=0). Its function is as follows. Involved in protein export. Acts as a chaperone by maintaining the newly synthesized protein in an open conformation. Functions as a peptidyl-prolyl cis-trans isomerase. The sequence is that of Trigger factor from Nocardia farcinica (strain IFM 10152).